The sequence spans 444 residues: IMP-specific 5'-nucleotidase 1 (444 aa).

Lys132 and His150 together coordinate ATP. Asp170 serves as the catalytic Nucleophile. Residues Asp170, Asp172, Asp178, Thr204, Ser207, Ser308, Asp363, and Lys371 each coordinate IMP. Residues Asp170 and Asp172 each coordinate Mg(2+). Asp172 serves as the catalytic Proton donor. A Mg(2+)-binding site is contributed by Asp394.

This sequence belongs to the ISN1 family. In terms of assembly, homotetramer. Mg(2+) serves as cofactor.

The protein localises to the cytoplasm. The enzyme catalyses IMP + H2O = inosine + phosphate. With respect to regulation, at physiological pH, allosterically activated by ATP. ATP binding is a prerequisite to magnesium and substrate binding. ATP binds to 2 of the subunits in the homotetramer inducing a closure of these 2 subunits and the release of the C-terminal loop, thereby activating the enzyme. In this conformation, the enzyme can bind IMP and magnesium which ultimately leads to the release of ATP. At pH 5, ATP does not have an allosteric role and is dispensable for magnesium and substrate binding. Inhibited by phosphocholine and D-myo-inositol-4-phosphate. Functionally, specifically, catalyzes the dephosphorylation of inosine monophosphate (IMP) into inosine. By dephosphorylating IMP, plays a role in the purine salvage pathway. Does not have phosphotransferase activity with IMP as phosphate donor and adenosine as phosphate acceptor. The sequence is that of IMP-specific 5'-nucleotidase 1 from Plasmodium falciparum (isolate 3D7).